A 246-amino-acid polypeptide reads, in one-letter code: Large ribosomal subunit protein uL3 (246 aa).

Gln151 carries the N5-methylglutamine modification.

Belongs to the universal ribosomal protein uL3 family. Part of the 50S ribosomal subunit. Forms a cluster with proteins L14 and L19. Methylated by PrmB.

Functionally, one of the primary rRNA binding proteins, it binds directly near the 3'-end of the 23S rRNA, where it nucleates assembly of the 50S subunit. The chain is Large ribosomal subunit protein uL3 from Bartonella quintana (strain Toulouse) (Rochalimaea quintana).